The chain runs to 234 residues: LRP chaperone MESD (234 aa).

Positions 1–33 are cleaved as a signal peptide; sequence MAASRWARKAVVLLCASDLLLLLLLLPPPGSCA. The chaperone domain stretch occupies residues 1-164; sequence MAASRWARKA…DRAIFMLRDG (164 aa). Disordered stretches follow at residues 31 to 95 and 187 to 234; these read SCAA…DFSK and GQVY…REDL. Basic and acidic residues predominate over residues 54-70; that stretch reads DIRDYNDADMARLLEQW. Over residues 71–80 the composition is skewed to acidic residues; sequence EKDDDIEEGD. Residues 165–204 are escort domain; sequence SYAWEIKDFLVGQDRCADVTLEGQVYPGKGGGSKEKNKTK. Residues 196 to 234 are compositionally biased toward basic and acidic residues; the sequence is GSKEKNKTKQDKGKKKKEGDLKSRSSKEENRAGNKREDL. Asn201 is a glycosylation site (N-linked (GlcNAc...) asparagine). The short motif at 231–234 is the Prevents secretion from ER element; the sequence is REDL.

The protein belongs to the MESD family. As to quaternary structure, monomer. Interacts with LRP5; the interaction prevents LRP5 from forming aggregates and chaperones LRP6 to the plasma membrane. Interacts with LRP6; the interaction prevents LRP6 from forming aggregates and chaperones LRP6 to the plasma membrane. Interacts with LRP4; the interaction promotes glycosylation of LRP4 and its cell-surface expression.

The protein resides in the endoplasmic reticulum. Chaperone specifically assisting the folding of beta-propeller/EGF modules within the family of low-density lipoprotein receptors (LDLRs). Acts as a modulator of the Wnt pathway through chaperoning the coreceptors of the canonical Wnt pathway, LRP5 and LRP6, to the plasma membrane. Essential for specification of embryonic polarity and mesoderm induction. Plays an essential role in neuromuscular junction (NMJ) formation by promoting cell-surface expression of LRP4. May regulate phagocytosis of apoptotic retinal pigment epithelium (RPE) cells. This is LRP chaperone MESD from Homo sapiens (Human).